We begin with the raw amino-acid sequence, 648 residues long: Chaperone protein HtpG (648 aa).

Residues 1–353 (MNARVEQLEF…AQDMSLNVSR (353 aa)) form an a; substrate-binding region. The tract at residues 354–567 (EILQQDRQIK…TFGITPALAR (214 aa)) is b. Positions 568–648 (IYRATGQDVP…LLADRLTRTL (81 aa)) are c.

The protein belongs to the heat shock protein 90 family. Homodimer.

It is found in the cytoplasm. Molecular chaperone. Has ATPase activity. This Mycobacterium ulcerans (strain Agy99) protein is Chaperone protein HtpG.